We begin with the raw amino-acid sequence, 538 residues long: Nicotinate phosphoribosyltransferase (538 aa).

Residues Tyr-21 and Thr-210 each contribute to the nicotinate site. A Phosphohistidine modification is found at His-213. Arg-318 contacts nicotinate. Thr-380 lines the 5-phospho-alpha-D-ribose 1-diphosphate pocket.

Belongs to the NAPRTase family. In terms of assembly, homodimer. The cofactor is Mg(2+). It depends on Mn(2+) as a cofactor. In terms of processing, transiently phosphorylated on a His residue during the reaction cycle. Phosphorylation strongly increases the affinity for substrates and increases the rate of nicotinate D-ribonucleotide production. Dephosphorylation regenerates the low-affinity form of the enzyme, leading to product release. In terms of tissue distribution, abundantly expressed in the small intestine, liver and kidney.

It localises to the cytoplasm. Its subcellular location is the cytosol. It catalyses the reaction nicotinate + 5-phospho-alpha-D-ribose 1-diphosphate + ATP + H2O = nicotinate beta-D-ribonucleotide + ADP + phosphate + diphosphate. The protein operates within cofactor biosynthesis; NAD(+) biosynthesis; nicotinate D-ribonucleotide from nicotinate: step 1/1. Functionally, catalyzes the first step in the biosynthesis of NAD from nicotinic acid, the ATP-dependent synthesis of beta-nicotinate D-ribonucleotide from nicotinate and 5-phospho-D-ribose 1-phosphate. Helps prevent cellular oxidative stress via its role in NAD biosynthesis. The protein is Nicotinate phosphoribosyltransferase (Naprt) of Mus musculus (Mouse).